A 172-amino-acid chain; its full sequence is GTP-dependent dephospho-CoA kinase (172 aa).

Residues Asp40, Val41, Val42, Asp59, and Glu112 each coordinate GTP.

This sequence belongs to the GTP-dependent DPCK family.

It carries out the reaction 3'-dephospho-CoA + GTP = GDP + CoA + H(+). The protein operates within cofactor biosynthesis; coenzyme A biosynthesis. In terms of biological role, catalyzes the GTP-dependent phosphorylation of the 3'-hydroxyl group of dephosphocoenzyme A to form coenzyme A (CoA). The sequence is that of GTP-dependent dephospho-CoA kinase from Methanospirillum hungatei JF-1 (strain ATCC 27890 / DSM 864 / NBRC 100397 / JF-1).